We begin with the raw amino-acid sequence, 455 residues long: Argininosuccinate lyase (455 aa).

The protein belongs to the lyase 1 family. Argininosuccinate lyase subfamily.

It localises to the cytoplasm. It carries out the reaction 2-(N(omega)-L-arginino)succinate = fumarate + L-arginine. It functions in the pathway amino-acid biosynthesis; L-arginine biosynthesis; L-arginine from L-ornithine and carbamoyl phosphate: step 3/3. The polypeptide is Argininosuccinate lyase (Caulobacter sp. (strain K31)).